Here is a 273-residue protein sequence, read N- to C-terminus: Transmembrane protein 202 (273 aa).

4 consecutive transmembrane segments (helical) span residues 53–75 (HIYI…IAMS), 121–141 (FFLI…SSWI), 155–175 (VSML…LFVA), and 189–209 (LLWT…AGII). The interval 242–273 (TTVSPAKDEGPRSEMESLSVREKNLPKSGLWW) is disordered. A compositionally biased stretch (basic and acidic residues) spans 247–266 (AKDEGPRSEMESLSVREKNL).

The protein resides in the membrane. The sequence is that of Transmembrane protein 202 (TMEM202) from Homo sapiens (Human).